A 467-amino-acid polypeptide reads, in one-letter code: Glutamate--tRNA ligase (467 aa).

A 'HIGH' region motif is present at residues 9-19 (PSPTGYLHIGG). The short motif at 237-241 (KLSKR) is the 'KMSKS' region element. Lys-240 is a binding site for ATP.

This sequence belongs to the class-I aminoacyl-tRNA synthetase family. Glutamate--tRNA ligase type 1 subfamily. In terms of assembly, monomer.

It is found in the cytoplasm. The catalysed reaction is tRNA(Glu) + L-glutamate + ATP = L-glutamyl-tRNA(Glu) + AMP + diphosphate. Catalyzes the attachment of glutamate to tRNA(Glu) in a two-step reaction: glutamate is first activated by ATP to form Glu-AMP and then transferred to the acceptor end of tRNA(Glu). The chain is Glutamate--tRNA ligase from Xanthomonas campestris pv. campestris (strain B100).